A 2690-amino-acid polypeptide reads, in one-letter code: Probable polyketide synthase 28 (2690 aa).

Residues 15 to 443 (YGDVAVIGIG…GSNVCLILSE (429 aa)) form the Ketosynthase family 3 (KS3) domain. Catalysis depends on for beta-ketoacyl synthase activity residues Cys187, His326, and His366. Residues 651 to 684 (GVSADIIVGHSLGELSSSYSSGMIDFETLCHLIY) are acyl/malonyl transferases. The active-site For acyl/malonyl transferase activity is the Ser661. Residues 906–934 (NFKSQLTNINNNNNNINNNNNNNNNNNNN) adopt a coiled-coil conformation. A disordered region spans residues 916–946 (NNNNNINNNNNNNNNNNNNNNNNNNNNNNNN). Residues 973-1102 (HEKITNEGPS…GNFSLFKHNS (130 aa)) are N-terminal hotdog fold. Residues 973 to 1285 (HEKITNEGPS…CSSVSLANPS (313 aa)) form the PKS/mFAS DH domain. His1014 acts as the Proton acceptor; for dehydratase activity in catalysis. The C-terminal hotdog fold stretch occupies residues 1119-1285 (NFTTISKHDF…CSSVSLANPS (167 aa)). Residue Asp1188 is the Proton donor; for dehydratase activity of the active site. Residues 1401 to 1429 (LNHHNNSENKNKNNNNNNNSNNNENSNNE) are disordered. The segment covering 1412–1429 (KNNNNNNNSNNNENSNNE) has biased composition (low complexity). The Carrier domain maps to 2594 to 2671 (SDNEFIHSTI…QSIDIIKFGY (78 aa)). Ser2631 carries the O-(pantetheine 4'-phosphoryl)serine modification.

Pantetheine 4'-phosphate serves as cofactor.

Its function is as follows. Probable polyketide synthase. This chain is Probable polyketide synthase 28 (pks28), found in Dictyostelium discoideum (Social amoeba).